Reading from the N-terminus, the 38-residue chain is Photosystem II reaction center protein T (38 aa).

A helical membrane pass occupies residues 3–23 (ALVYTFLLVSTLGIIFFAIFF).

Belongs to the PsbT family. In terms of assembly, PSII is composed of 1 copy each of membrane proteins PsbA, PsbB, PsbC, PsbD, PsbE, PsbF, PsbH, PsbI, PsbJ, PsbK, PsbL, PsbM, PsbT, PsbY, PsbZ, Psb30/Ycf12, at least 3 peripheral proteins of the oxygen-evolving complex and a large number of cofactors. It forms dimeric complexes.

It is found in the plastid. It localises to the chloroplast thylakoid membrane. In terms of biological role, found at the monomer-monomer interface of the photosystem II (PS II) dimer, plays a role in assembly and dimerization of PSII. PSII is a light-driven water plastoquinone oxidoreductase, using light energy to abstract electrons from H(2)O, generating a proton gradient subsequently used for ATP formation. This Secale cereale (Rye) protein is Photosystem II reaction center protein T.